The primary structure comprises 286 residues: Meteorin-like protein (286 aa).

The N-terminal stretch at 1–20 is a signal peptide; sequence MLRRGLLSFFMVILIDRGTS. 5 disulfide bridges follow: Cys-28/Cys-51, Cys-84/Cys-120, Cys-165/Cys-235, Cys-168/Cys-259, and Cys-178/Cys-281. Residue Asn-203 is glycosylated (N-linked (GlcNAc...) asparagine).

This sequence belongs to the meteorin family.

It localises to the secreted. Its function is as follows. Hormone induced following exercise or cold exposure that promotes energy expenditure. Induced either in the skeletal muscle after exercise or in adipose tissue following cold exposure and is present in the circulation. Able to stimulate energy expenditure associated with the browning of the white fat depots and improves glucose tolerance. The polypeptide is Meteorin-like protein (metrnl) (Xenopus laevis (African clawed frog)).